Here is a 111-residue protein sequence, read N- to C-terminus: uncharacterized protein (111 aa).

Belongs to the asfivirus E111R family.

This is an uncharacterized protein from Ornithodoros (relapsing fever ticks).